Here is a 690-residue protein sequence, read N- to C-terminus: UvrABC system protein C (690 aa).

The region spanning 15 to 94 is the GIY-YIG domain; it reads TDPGVYTFRD…IKRFNPRFNV (80 aa). A UVR domain is found at 207 to 242; that stretch reads EPVLRRVRKEMEQASENLDFERAASLRDQLQAMQKS.

Belongs to the UvrC family. In terms of assembly, interacts with UvrB in an incision complex.

It localises to the cytoplasm. Functionally, the UvrABC repair system catalyzes the recognition and processing of DNA lesions. UvrC both incises the 5' and 3' sides of the lesion. The N-terminal half is responsible for the 3' incision and the C-terminal half is responsible for the 5' incision. This Corynebacterium jeikeium (strain K411) protein is UvrABC system protein C.